Consider the following 83-residue polypeptide: Acyl carrier protein (83 aa).

In terms of domain architecture, Carrier spans 2–77; the sequence is STIEEKVKTI…AAIDFISNSH (76 aa). Position 37 is an O-(pantetheine 4'-phosphoryl)serine (Ser-37).

This sequence belongs to the acyl carrier protein (ACP) family. Post-translationally, 4'-phosphopantetheine is transferred from CoA to a specific serine of apo-ACP by AcpS. This modification is essential for activity because fatty acids are bound in thioester linkage to the sulfhydryl of the prosthetic group.

The protein resides in the cytoplasm. The protein operates within lipid metabolism; fatty acid biosynthesis. Carrier of the growing fatty acid chain in fatty acid biosynthesis. The sequence is that of Acyl carrier protein from Blochmanniella pennsylvanica (strain BPEN).